A 353-amino-acid polypeptide reads, in one-letter code: Putative 3-oxoacyl-[acyl-carrier-protein] synthase 3 (353 aa).

Active-site residues include cysteine 122, histidine 268, and asparagine 299.

The protein belongs to the thiolase-like superfamily. FabH family. Homodimer.

The protein resides in the cytoplasm. The enzyme catalyses malonyl-[ACP] + acetyl-CoA + H(+) = 3-oxobutanoyl-[ACP] + CO2 + CoA. It participates in lipid metabolism; fatty acid biosynthesis. Functionally, may catalyze the condensation reaction of fatty acid synthesis by the addition to an acyl acceptor of two carbons from malonyl-ACP. The protein is Putative 3-oxoacyl-[acyl-carrier-protein] synthase 3 of Campylobacter jejuni subsp. jejuni serotype O:2 (strain ATCC 700819 / NCTC 11168).